Consider the following 354-residue polypeptide: G protein alpha o subunit (354 aa).

Residue Gly-2 is the site of N-myristoyl glycine attachment. Cys-3 carries the S-palmitoyl cysteine lipid modification. The 323-residue stretch at Lys-32–Tyr-354 folds into the G-alpha domain. Residues Lys-35–Thr-48 are G1 motif. GTP-binding positions include Gly-40 to Ser-47, Leu-176 to Thr-182, Asp-201 to Gln-205, Asn-270 to Asp-273, and Ala-326. Residues Ser-47 and Thr-182 each coordinate Mg(2+). A G2 motif region spans residues Asp-174–Thr-182. A G3 motif region spans residues Phe-197 to Arg-206. The tract at residues Ile-266–Asp-273 is G4 motif. Positions Thr-324–Thr-329 are G5 motif.

It belongs to the G-alpha family. G(i/o/t/z) subfamily. In terms of assembly, g proteins are composed of 3 units; alpha, beta and gamma. The alpha chain contains the guanine nucleotide binding site. As to expression, expressed primarily in neuronal cell bodies in the brain, optic lobe, and thoracic and abdominal ganglia. Also expressed in antenna, oocytes and ovarian nurse cells.

In terms of biological role, guanine nucleotide-binding proteins (G proteins) are involved as modulators or transducers in various transmembrane signaling systems. Plays a role in glial cell differentiation during embryogenesis; loco, Galphai and the G-protein coupled receptor, moody, are required in the surface glia to achieve effective insulation of the nerve cord. This chain is G protein alpha o subunit (Galphao), found in Drosophila melanogaster (Fruit fly).